The following is a 311-amino-acid chain: Formimidoylglutamase (311 aa).

The Mn(2+) site is built by H122, D151, H153, D155, C242, and D244.

It belongs to the arginase family. Mn(2+) serves as cofactor.

It catalyses the reaction N-formimidoyl-L-glutamate + H2O = formamide + L-glutamate. Its pathway is amino-acid degradation; L-histidine degradation into L-glutamate; L-glutamate from N-formimidoyl-L-glutamate (hydrolase route): step 1/1. Functionally, catalyzes the conversion of N-formimidoyl-L-glutamate to L-glutamate and formamide. The polypeptide is Formimidoylglutamase (Pseudomonas paraeruginosa (strain DSM 24068 / PA7) (Pseudomonas aeruginosa (strain PA7))).